Consider the following 477-residue polypeptide: UDP-N-acetylmuramate--L-alanine ligase (477 aa).

115–121 is an ATP binding site; sequence GTHGKTT.

This sequence belongs to the MurCDEF family.

Its subcellular location is the cytoplasm. It carries out the reaction UDP-N-acetyl-alpha-D-muramate + L-alanine + ATP = UDP-N-acetyl-alpha-D-muramoyl-L-alanine + ADP + phosphate + H(+). It functions in the pathway cell wall biogenesis; peptidoglycan biosynthesis. Functionally, cell wall formation. The protein is UDP-N-acetylmuramate--L-alanine ligase of Gluconobacter oxydans (strain 621H) (Gluconobacter suboxydans).